The primary structure comprises 446 residues: N-succinylarginine dihydrolase (446 aa).

Residues 19-28, asparagine 110, and 137-138 each bind substrate; these read AGLSFGNVAS and HR. The active site involves glutamate 174. Arginine 213 contributes to the substrate binding site. Residue histidine 249 is part of the active site. Substrate-binding residues include aspartate 251 and asparagine 364. Cysteine 370 serves as the catalytic Nucleophile.

The protein belongs to the succinylarginine dihydrolase family. In terms of assembly, homodimer.

It catalyses the reaction N(2)-succinyl-L-arginine + 2 H2O + 2 H(+) = N(2)-succinyl-L-ornithine + 2 NH4(+) + CO2. It participates in amino-acid degradation; L-arginine degradation via AST pathway; L-glutamate and succinate from L-arginine: step 2/5. Its function is as follows. Catalyzes the hydrolysis of N(2)-succinylarginine into N(2)-succinylornithine, ammonia and CO(2). In Burkholderia mallei (strain NCTC 10247), this protein is N-succinylarginine dihydrolase.